The primary structure comprises 413 residues: O-methyltransferase kntB (413 aa).

S-adenosyl-L-methionine is bound by residues 255-256 (GG), Asp280, 302-303 (NF), and Arg319. Catalysis depends on His322, which acts as the Proton acceptor.

The protein belongs to the class I-like SAM-binding methyltransferase superfamily. Cation-independent O-methyltransferase family. The cofactor is S-adenosyl-L-methionine.

Its pathway is secondary metabolite biosynthesis. In terms of biological role, non-reducing polyketide synthase; part of the gene cluster that mediates the biosynthesis of the bicoumarin kotanin. The non-reducing polyketide synthase ktnS first catalyzes the formation of the pentaketidic 4,7-dihydroxy-5-methylcoumarin from acetyl coenzyme A and 4 malonyl coenzyme A molecules. Further O-methylation by ktnB leads to the formation of 7-demethylsiderin. Then, an oxidative phenol coupling catalyzed by the cytochrome P450 monooxygenase ktnC forms the 8,8'-dimer P-orlandin via dimerization the monomeric precursor, 7-demethylsiderin. P-orlandin is subsequently O-methylated in a stepwise fashion to demethylkotanin and kotanin. This chain is O-methyltransferase kntB, found in Aspergillus niger (strain ATCC MYA-4892 / CBS 513.88 / FGSC A1513).